Reading from the N-terminus, the 1132-residue chain is Phosphatidylinositide phosphatase SAC2 (1132 aa).

Residues Leu-167–Gly-518 enclose the SAC domain. Positions Arg-593–Ile-760 constitute a hSac2 domain. Phosphoserine occurs at positions 827 and 830. A disordered region spans residues Glu-846 to Leu-875. The segment covering Asp-856–Gln-874 has biased composition (basic and acidic residues). Ser-878, Ser-881, Ser-907, and Ser-910 each carry phosphoserine. Disordered regions lie at residues Val-923–Ser-942 and Leu-974–Ser-1017. Ser-1103 is modified (phosphoserine).

In terms of assembly, homodimer. Interacts with OCRL and RAB5A. Interacts with INPP5B and INPP4A. Interacts with STAT3; the interaction is independent of STAT3 'Tyr-705' phosphorylation status. In terms of tissue distribution, ubiquitous. Highly expressed in brain.

The protein resides in the membrane. It is found in the clathrin-coated pit. It localises to the early endosome. Its subcellular location is the recycling endosome. The catalysed reaction is a myo-inositol phosphate + H2O = myo-inositol + phosphate. Functionally, inositol 4-phosphatase which mainly acts on phosphatidylinositol 4-phosphate. May be functionally linked to OCRL, which converts phosphatidylinositol 4,5-bisphosphate to phosphatidylinositol, for a sequential dephosphorylation of phosphatidylinositol 4,5-bisphosphate at the 5 and 4 position of inositol, thus playing an important role in the endocytic recycling. Regulator of TF:TFRC and integrins recycling pathway, is also involved in cell migration mechanisms. Modulates AKT/GSK3B pathway by decreasing AKT and GSK3B phosphorylation. Negatively regulates STAT3 signaling pathway through inhibition of STAT3 phosphorylation and translocation to the nucleus. Functionally important modulator of cardiac myocyte size and of the cardiac response to stress. May play a role as negative regulator of axon regeneration after central nervous system injuries. This is Phosphatidylinositide phosphatase SAC2 from Homo sapiens (Human).